Here is a 515-residue protein sequence, read N- to C-terminus: Membrane-bound lytic murein transglycosylase F (515 aa).

Residues 1-32 (MKKLKINYLFIGILTLLLAAALWPSIPWFGKA) form the signal peptide. Residues 33–269 (DNRIAAIQSR…RMEEKYLGHG (237 aa)) are non-LT domain. Residues 270-515 (DDFDYVDTRT…PFSLKKKDEN (246 aa)) form an LT domain region. E314 is a catalytic residue. Residues 493–515 (QPSSNYLSHSPSLPFSLKKKDEN) are disordered.

In the N-terminal section; belongs to the bacterial solute-binding protein 3 family. This sequence in the C-terminal section; belongs to the transglycosylase Slt family.

It localises to the cell outer membrane. It carries out the reaction Exolytic cleavage of the (1-&gt;4)-beta-glycosidic linkage between N-acetylmuramic acid (MurNAc) and N-acetylglucosamine (GlcNAc) residues in peptidoglycan, from either the reducing or the non-reducing ends of the peptidoglycan chains, with concomitant formation of a 1,6-anhydrobond in the MurNAc residue.. Its function is as follows. Murein-degrading enzyme that degrades murein glycan strands and insoluble, high-molecular weight murein sacculi, with the concomitant formation of a 1,6-anhydromuramoyl product. Lytic transglycosylases (LTs) play an integral role in the metabolism of the peptidoglycan (PG) sacculus. Their lytic action creates space within the PG sacculus to allow for its expansion as well as for the insertion of various structures such as secretion systems and flagella. The polypeptide is Membrane-bound lytic murein transglycosylase F (Citrobacter koseri (strain ATCC BAA-895 / CDC 4225-83 / SGSC4696)).